The sequence spans 146 residues: HTH-type transcriptional regulator NsrR (146 aa).

In terms of domain architecture, HTH rrf2-type spans 2-133 (KLTNYTDYSL…DKYTLRDLVK (132 aa)). The segment at residues 28–51 (IKQIAETYSISKNHLMKVIYRLGQ) is a DNA-binding region (H-T-H motif). 3 residues coordinate [2Fe-2S] cluster: cysteine 92, cysteine 100, and cysteine 106.

The cofactor is [2Fe-2S] cluster.

Functionally, nitric oxide-responsive transcriptional regulator. It represses the expression of flavohemoprotein hmp and the nitrite reductase nasD. Probably plays a role in the up-regulation of the resDE regulon in the presence of nitric oxide. This is HTH-type transcriptional regulator NsrR (nsrR) from Bacillus subtilis (strain 168).